The sequence spans 286 residues: Orotidine 5'-phosphate decarboxylase (286 aa).

Lys-97 serves as the catalytic Proton donor.

This sequence belongs to the OMP decarboxylase family. Type 2 subfamily.

It catalyses the reaction orotidine 5'-phosphate + H(+) = UMP + CO2. The protein operates within pyrimidine metabolism; UMP biosynthesis via de novo pathway; UMP from orotate: step 2/2. This chain is Orotidine 5'-phosphate decarboxylase (pyrF), found in Clostridium acetobutylicum (strain ATCC 824 / DSM 792 / JCM 1419 / IAM 19013 / LMG 5710 / NBRC 13948 / NRRL B-527 / VKM B-1787 / 2291 / W).